The sequence spans 333 residues: GTP 3',8-cyclase (333 aa).

A Radical SAM core domain is found at lysine 7–glutamate 221. Position 16 (arginine 16) interacts with GTP. The [4Fe-4S] cluster site is built by cysteine 23 and cysteine 27. Tyrosine 29 provides a ligand contact to S-adenosyl-L-methionine. Residue cysteine 30 participates in [4Fe-4S] cluster binding. Residue arginine 66 coordinates GTP. Position 70 (glycine 70) interacts with S-adenosyl-L-methionine. Position 97 (threonine 97) interacts with GTP. Residue serine 121 coordinates S-adenosyl-L-methionine. Lysine 158 lines the GTP pocket. Methionine 192 is a binding site for S-adenosyl-L-methionine. 2 residues coordinate [4Fe-4S] cluster: cysteine 257 and cysteine 260. Arginine 262 to arginine 264 serves as a coordination point for GTP. Cysteine 274 is a [4Fe-4S] cluster binding site.

It belongs to the radical SAM superfamily. MoaA family. Monomer and homodimer. The cofactor is [4Fe-4S] cluster.

The enzyme catalyses GTP + AH2 + S-adenosyl-L-methionine = (8S)-3',8-cyclo-7,8-dihydroguanosine 5'-triphosphate + 5'-deoxyadenosine + L-methionine + A + H(+). It participates in cofactor biosynthesis; molybdopterin biosynthesis. Functionally, catalyzes the cyclization of GTP to (8S)-3',8-cyclo-7,8-dihydroguanosine 5'-triphosphate. The chain is GTP 3',8-cyclase from Listeria monocytogenes serovar 1/2a (strain ATCC BAA-679 / EGD-e).